The following is a 220-amino-acid chain: Glutathione S-transferase-like protein FUS3 (220 aa).

Residues 3 to 84 (SFGTLYTYMP…YVAQSGPQAS (82 aa)) form the GST N-terminal domain. One can recognise a GST C-terminal domain in the interval 90–220 (DAMSSAKIRQ…LIEKRRIGAK (131 aa)).

The protein belongs to the GST superfamily.

Functionally, glutathione S-transferase-like protein; part of the gene cluster that mediates the biosynthesis of the mycotoxin fusarin C. Within the cluster, FUS1, FUS2, FUS8 and FUS9 are sufficient for fusarin production. The other FUS cluster members are not essential for fusarin C biosynthesis. The polypeptide is Glutathione S-transferase-like protein FUS3 (Gibberella moniliformis (strain M3125 / FGSC 7600) (Maize ear and stalk rot fungus)).